The following is a 394-amino-acid chain: Galactose-3-O-sulfotransferase 2 (394 aa).

The Cytoplasmic portion of the chain corresponds to 1-8 (MWGSQHRS). The helical; Signal-anchor for type II membrane protein transmembrane segment at 9 to 29 (FQVALWFLVLAVFLLVGFLHV) threads the bilayer. Residues 30-394 (DFRLLIPDKV…TPKDIPFLKK (365 aa)) lie on the Lumenal side of the membrane. Residues asparagine 72, asparagine 176, asparagine 284, and asparagine 326 are each glycosylated (N-linked (GlcNAc...) asparagine).

This sequence belongs to the galactose-3-O-sulfotransferase family.

Its subcellular location is the golgi apparatus. The protein localises to the golgi stack membrane. It participates in protein modification; carbohydrate sulfation. Strongly inhibited by Cu(2+) and Zn(2+). Transfers a sulfate group to the hydroxyl group at C3 of non-reducing beta-galactosyl residues. Acts both on type 1 (Gal-beta-1,3-GlcNAc) and type 2 (Gal-beta-1,4-GlcNAc) chains with similar efficiency. The polypeptide is Galactose-3-O-sulfotransferase 2 (Gal3st2) (Mus musculus (Mouse)).